Reading from the N-terminus, the 103-residue chain is NADH-quinone oxidoreductase subunit K 1 (103 aa).

3 consecutive transmembrane segments (helical) span residues 7-27, 31-51, and 63-83; these read ISWF…GFLF, IITV…SFVT, and LFTF…LAII.

This sequence belongs to the complex I subunit 4L family. As to quaternary structure, NDH-1 is composed of 14 different subunits. Subunits NuoA, H, J, K, L, M, N constitute the membrane sector of the complex.

The protein resides in the cell inner membrane. It catalyses the reaction a quinone + NADH + 5 H(+)(in) = a quinol + NAD(+) + 4 H(+)(out). In terms of biological role, NDH-1 shuttles electrons from NADH, via FMN and iron-sulfur (Fe-S) centers, to quinones in the respiratory chain. The immediate electron acceptor for the enzyme in this species is believed to be ubiquinone. Couples the redox reaction to proton translocation (for every two electrons transferred, four hydrogen ions are translocated across the cytoplasmic membrane), and thus conserves the redox energy in a proton gradient. This Solibacter usitatus (strain Ellin6076) protein is NADH-quinone oxidoreductase subunit K 1.